Here is a 259-residue protein sequence, read N- to C-terminus: Small ribosomal subunit protein eS1 (259 aa).

Disordered regions lie at residues 1–23 (MAVG…KTAD) and 235–259 (ESKS…VDSV). Residues 8-19 (KVTKGGKKGGKK) are compositionally biased toward basic residues. The segment covering 246-259 (SRPDHYEPPKVDSV) has biased composition (basic and acidic residues).

Belongs to the eukaryotic ribosomal protein eS1 family. Component of the small ribosomal subunit. Mature ribosomes consist of a small (40S) and a large (60S) subunit. The 40S subunit contains about 33 different proteins and 1 molecule of RNA (18S). The 60S subunit contains about 49 different proteins and 3 molecules of RNA (28S, 5.8S and 5S).

The protein localises to the cytoplasm. The sequence is that of Small ribosomal subunit protein eS1 from Schistosoma japonicum (Blood fluke).